The primary structure comprises 95 residues: Aspartyl/glutamyl-tRNA(Asn/Gln) amidotransferase subunit C (95 aa).

Belongs to the GatC family. As to quaternary structure, heterotrimer of A, B and C subunits.

It carries out the reaction L-glutamyl-tRNA(Gln) + L-glutamine + ATP + H2O = L-glutaminyl-tRNA(Gln) + L-glutamate + ADP + phosphate + H(+). It catalyses the reaction L-aspartyl-tRNA(Asn) + L-glutamine + ATP + H2O = L-asparaginyl-tRNA(Asn) + L-glutamate + ADP + phosphate + 2 H(+). In terms of biological role, allows the formation of correctly charged Asn-tRNA(Asn) or Gln-tRNA(Gln) through the transamidation of misacylated Asp-tRNA(Asn) or Glu-tRNA(Gln) in organisms which lack either or both of asparaginyl-tRNA or glutaminyl-tRNA synthetases. The reaction takes place in the presence of glutamine and ATP through an activated phospho-Asp-tRNA(Asn) or phospho-Glu-tRNA(Gln). The chain is Aspartyl/glutamyl-tRNA(Asn/Gln) amidotransferase subunit C from Chloroherpeton thalassium (strain ATCC 35110 / GB-78).